Reading from the N-terminus, the 229-residue chain is Heptaprenylglyceryl phosphate synthase (229 aa).

Lys-12 is a binding site for sn-glycerol 1-phosphate. Residues Asp-14 and Thr-40 each contribute to the Mg(2+) site. Residues 159–164 (YIEYSG), Gly-189, and 209–210 (GN) each bind sn-glycerol 1-phosphate.

The protein belongs to the GGGP/HepGP synthase family. Group I subfamily. Homodimer. The cofactor is Mg(2+).

It catalyses the reaction sn-glycerol 1-phosphate + all-trans-heptaprenyl diphosphate = 3-heptaprenyl-sn-glycero-1-phosphate + diphosphate. The protein operates within membrane lipid metabolism; glycerophospholipid metabolism. Prenyltransferase that catalyzes in vivo the transfer of the heptaprenyl moiety of heptaprenyl pyrophosphate (HepPP; 35 carbon atoms) to the C3 hydroxyl of sn-glycerol-1-phosphate (G1P), producing heptaprenylglyceryl phosphate (HepGP). This reaction is an ether-bond-formation step in the biosynthesis of archaea-type G1P-based membrane lipids found in Bacillales. This is Heptaprenylglyceryl phosphate synthase from Oceanobacillus iheyensis (strain DSM 14371 / CIP 107618 / JCM 11309 / KCTC 3954 / HTE831).